The chain runs to 123 residues: Small ribosomal subunit protein uS13 (123 aa).

Residues 97–123 (PVRGQRTKTNARTRKGPRKTVGVRRKK) form a disordered region.

This sequence belongs to the universal ribosomal protein uS13 family. Part of the 30S ribosomal subunit. Forms a loose heterodimer with protein S19. Forms two bridges to the 50S subunit in the 70S ribosome.

In terms of biological role, located at the top of the head of the 30S subunit, it contacts several helices of the 16S rRNA. In the 70S ribosome it contacts the 23S rRNA (bridge B1a) and protein L5 of the 50S subunit (bridge B1b), connecting the 2 subunits; these bridges are implicated in subunit movement. Contacts the tRNAs in the A and P-sites. The polypeptide is Small ribosomal subunit protein uS13 (Pelotomaculum thermopropionicum (strain DSM 13744 / JCM 10971 / SI)).